The following is a 124-amino-acid chain: NADH-quinone oxidoreductase subunit A (124 aa).

3 helical membrane-spanning segments follow: residues 11 to 31 (YLPI…IMIL), 68 to 88 (LVAI…PWAI), and 93 to 113 (IGKI…IGFV).

The protein belongs to the complex I subunit 3 family. As to quaternary structure, NDH-1 is composed of 14 different subunits. Subunits NuoA, H, J, K, L, M, N constitute the membrane sector of the complex.

The protein localises to the cell inner membrane. The enzyme catalyses a quinone + NADH + 5 H(+)(in) = a quinol + NAD(+) + 4 H(+)(out). NDH-1 shuttles electrons from NADH, via FMN and iron-sulfur (Fe-S) centers, to quinones in the respiratory chain. The immediate electron acceptor for the enzyme in this species is believed to be ubiquinone. Couples the redox reaction to proton translocation (for every two electrons transferred, four hydrogen ions are translocated across the cytoplasmic membrane), and thus conserves the redox energy in a proton gradient. This Rickettsia bellii (strain RML369-C) protein is NADH-quinone oxidoreductase subunit A.